We begin with the raw amino-acid sequence, 148 residues long: Cell division protein SepF (148 aa).

This sequence belongs to the SepF family. In terms of assembly, homodimer. Interacts with FtsZ.

It localises to the cytoplasm. Cell division protein that is part of the divisome complex and is recruited early to the Z-ring. Probably stimulates Z-ring formation, perhaps through the cross-linking of FtsZ protofilaments. Its function overlaps with FtsA. The sequence is that of Cell division protein SepF from Alkaliphilus metalliredigens (strain QYMF).